Here is a 72-residue protein sequence, read N- to C-terminus: uncharacterized protein (72 aa).

The protein belongs to the phage portal family. HK97 subfamily.

This is an uncharacterized protein from Rickettsia conorii (strain ATCC VR-613 / Malish 7).